We begin with the raw amino-acid sequence, 225 residues long: Cytochrome b6-f complex iron-sulfur subunit, chloroplastic (225 aa).

Residues 1–46 (MASTALSTASNPTQLCRSRASLGKPVKGLGFGRERVPRTATTITCQ) constitute a chloroplast transit peptide. Residues 69 to 89 (LLGAISLPTVGMLVPYGAFFI) form a helical membrane-spanning segment. In terms of domain architecture, Rieske spans 112-208 (AEEWLKTHGP…ADVDDGKVLF (97 aa)). The [2Fe-2S] cluster site is built by Cys154, His156, Cys172, and His175. Cysteines 159 and 174 form a disulfide.

It belongs to the Rieske iron-sulfur protein family. As to quaternary structure, the 4 large subunits of the cytochrome b6-f complex are cytochrome b6, subunit IV (17 kDa polypeptide, petD), cytochrome f and the Rieske protein, while the 4 small subunits are petG, petL, petM and petN. The complex functions as a dimer. The cofactor is [2Fe-2S] cluster.

Its subcellular location is the plastid. The protein localises to the chloroplast thylakoid membrane. The enzyme catalyses 2 oxidized [plastocyanin] + a plastoquinol + 2 H(+)(in) = 2 reduced [plastocyanin] + a plastoquinone + 4 H(+)(out). Functionally, component of the cytochrome b6-f complex, which mediates electron transfer between photosystem II (PSII) and photosystem I (PSI), cyclic electron flow around PSI, and state transitions. The sequence is that of Cytochrome b6-f complex iron-sulfur subunit, chloroplastic (petC) from Oryza sativa subsp. japonica (Rice).